The following is a 145-amino-acid chain: Leghemoglobin-2 (145 aa).

The Globin domain maps to 3 to 145; the sequence is AFSDKQEGLV…ELAAAIKKAY (143 aa). Nitrated tyrosine occurs at positions 26 and 31. Heme b is bound at residue Ser-46. Ser-46 carries the post-translational modification Phosphoserine. O2 is bound at residue His-62. Residues Lys-65, His-93, and Lys-96 each contribute to the heme b site. The residue at position 134 (Tyr-134) is a Nitrated tyrosine.

Belongs to the plant globin family. Monomer. Post-translationally, nitrated in effective nodules and particularly in hypoxic conditions; this mechanism may play a protective role in the symbiosis by buffering toxic peroxynitrite NO(2)(-). Nitration level decrease during nodule senescence. Phosphorylation at Ser-46 disrupts the molecular environment of its porphyrin ring oxygen binding pocket, thus leading to a reduced oxygen consumption and to the delivery of oxygen O(2) to symbiosomes. In terms of tissue distribution, root nodules.

It is found in the cytoplasm. It localises to the cytosol. The protein resides in the nucleus. Its function is as follows. Leghemoglobin that reversibly binds oxygen O(2) through a pentacoordinated heme iron. In root nodules, facilitates the diffusion of oxygen to the bacteroids while preventing the bacterial nitrogenase from being inactivated by buffering dioxygen, nitric oxide and carbon monoxide, and promoting the formation of reactive oxygen species (ROS, e.g. H(2)O(2)). This role is essential for symbiotic nitrogen fixation (SNF). In Vigna unguiculata (Cowpea), this protein is Leghemoglobin-2.